The sequence spans 352 residues: Photosystem II protein D1 (352 aa).

Threonine 2 carries the post-translational modification N-acetylthreonine. Residue threonine 2 is modified to Phosphothreonine. Transmembrane regions (helical) follow at residues 29–46, 118–133, and 142–156; these read YIGW…TATS, HFLL…EWEL, and WIAV…AASA. Histidine 118 serves as a coordination point for chlorophyll a. Tyrosine 126 contributes to the pheophytin a binding site. Residues aspartate 170 and glutamate 189 each coordinate [CaMn4O5] cluster. Residues 197–218 traverse the membrane as a helical segment; it reads FHMLGVAGVFGGSLFSAMHGSL. Histidine 198 contacts chlorophyll a. A quinone is bound by residues histidine 215 and 264–265; that span reads SF. Histidine 215 is a Fe cation binding site. Histidine 272 is a Fe cation binding site. Residues 274-288 traverse the membrane as a helical segment; sequence FLAAWPVIGIWFTAL. Histidine 332, glutamate 333, aspartate 342, and alanine 344 together coordinate [CaMn4O5] cluster. The propeptide occupies 345–352; the sequence is STNSSSNN.

Belongs to the reaction center PufL/M/PsbA/D family. As to quaternary structure, PSII is composed of 1 copy each of membrane proteins PsbA, PsbB, PsbC, PsbD, PsbE, PsbF, PsbH, PsbI, PsbJ, PsbK, PsbL, PsbM, PsbT, PsbX, PsbY, PsbZ, Psb30/Ycf12, at least 3 peripheral proteins of the oxygen-evolving complex and a large number of cofactors. It forms dimeric complexes. The D1/D2 heterodimer binds P680, chlorophylls that are the primary electron donor of PSII, and subsequent electron acceptors. It shares a non-heme iron and each subunit binds pheophytin, quinone, additional chlorophylls, carotenoids and lipids. D1 provides most of the ligands for the Mn4-Ca-O5 cluster of the oxygen-evolving complex (OEC). There is also a Cl(-1) ion associated with D1 and D2, which is required for oxygen evolution. The PSII complex binds additional chlorophylls, carotenoids and specific lipids. serves as cofactor. In terms of processing, tyr-161 forms a radical intermediate that is referred to as redox-active TyrZ, YZ or Y-Z. Post-translationally, C-terminally processed by CTPA; processing is essential to allow assembly of the oxygen-evolving complex and thus photosynthetic growth.

The protein localises to the plastid. The protein resides in the chloroplast thylakoid membrane. The enzyme catalyses 2 a plastoquinone + 4 hnu + 2 H2O = 2 a plastoquinol + O2. Its function is as follows. This is one of the two reaction center proteins of photosystem II. Photosystem II (PSII) is a light-driven water:plastoquinone oxidoreductase that uses light energy to abstract electrons from H(2)O, generating O(2) and a proton gradient subsequently used for ATP formation. It consists of a core antenna complex that captures photons, and an electron transfer chain that converts photonic excitation into a charge separation. The D1/D2 (PsbA/PsbD) reaction center heterodimer binds P680, the primary electron donor of PSII as well as several subsequent electron acceptors. The protein is Photosystem II protein D1 of Chlamydomonas reinhardtii (Chlamydomonas smithii).